We begin with the raw amino-acid sequence, 203 residues long: Small ribosomal subunit protein uS4 (203 aa).

Residues 93 to 156 (TRLDNLVFRL…QNLAIVNEAI (64 aa)) enclose the S4 RNA-binding domain.

The protein belongs to the universal ribosomal protein uS4 family. Part of the 30S ribosomal subunit. Contacts protein S5. The interaction surface between S4 and S5 is involved in control of translational fidelity.

Its function is as follows. One of the primary rRNA binding proteins, it binds directly to 16S rRNA where it nucleates assembly of the body of the 30S subunit. In terms of biological role, with S5 and S12 plays an important role in translational accuracy. The chain is Small ribosomal subunit protein uS4 from Lacticaseibacillus casei (strain BL23) (Lactobacillus casei).